The following is a 2364-amino-acid chain: MNLVNKAQLQKMVYVKFRIQEDEYVAILNALEEYHNMSESSVVEKYLKLKDINNLTDNYLNTYKKSGRNKALKKFKEYLTMEVLELKNNSLTPVEKNLHFIWIGGQINDTAINYINQWKDVNSDYTVKVFYDSNAFLINTLKKTIVESATNNTLESFRENLNDPEFDYNKFYRKRMEIIYDKQKHFIDYYKSQIEENPEFIIDNIIKTYLSNEYSKDLEALNKYIEESLNKITANNGNDIRNLEKFADEDLVRLYNQELVERWNLAAASDILRISMLKEDGGVYLDVDILPGIQPDLFKSINKPDSITNTSWEMIKLEAIMKYKEYIPGYTSKNFDMLDEEVQRSFESALSSKSDKSEIFLPLDDIKVSPLEVKIAFANNSVINQALISLKDSYCSDLVINQIKNRYKILNDNLNPSINEGTDFNTTMKIFSDKLASISNEDNMMFMIKITNYLKVGFAPDVRSTINLSGPGVYTGAYQDLLMFKDNSTNIHLLEPELRNFEFPKTKISQLTEQEITSLWSFNQARAKSQFEEYKKGYFEGALGEDDNLDFAQNTVLDKDYVSKKILSSMKTRNKEYIHYIVQLQGDKISYEASCNLFSKDPYSSILYQKNIEGSETAYYYYVADAEIKEIDKYRIPYQISNKRNIKLTFIGHGKSEFNTDTFANLDVDSLSSEIETILNLAKADISPKYIEINLLGCNMFSYSISAEETYPGKLLLKIKDRVSELMPSISQDSITVSANQYEVRINEEGKREILDHSGKWINKEESIIKDISSKEYISFNPKENKIIVKSKYLHELSTLLQEIRNNANSSDIDLEKKVMLTECEINVASNIDRQIVEGRIEEAKNLTSDSINYIKNEFKLIESISDSLYDLKHQNGLDDSHFISFEDISKTENGFRIRFINKETGNSIFIETEKEIFSEYATHISKEISNIKDTIFDNVNGKLVKKVNLDAAHEVNTLNSAFFIQSLIEYNTTKESLSNLSVAMKVQVYAQLFSTGLNTITDASKVVELVSTALDETIDLLPTLSEGLPIIATIIDGVSLGAAIKELSETNDPLLRQEIEAKIGIMAVNLTAASTAIVTSALGIASGFSILLVPLAGISAGIPSLVNNELILQDKATKVIDYFKHISLAETEGAFTLLDDKIIMPQDDLVLSEIDFNNNSITLGKCEIWRAEGGSGHTLTDDIDHFFSSPSITYRKPWLSIYDVLNIKKEKIDFSKDLMVLPNAPNRVFGYEMGWTPGFRSLDNDGTKLLDRIRDHYEGQFYWRYFAFIADALITKLKPRYEDTNVRINLDGNTRSFIVPVITTEQIRKNLSYSFYGSGGSYSLSLSPYNMNIDLNLVENDTWVIDVDNVVKNITIESDEIQKGELIENILSKLNIEDNKIILNNHTINFYGDINESNRFISLTFSILEDINIIIEIDLVSKSYKILLSGNCMKLIENSSDIQQKIDHIGFNGEHQKYIPYSYIDNETKYNGFIDYSKKEGLFTAEFSNESIIRNIYMPDSNNLFIYSSKDLKDIRIINKGDVKLLIGNYFKDDMKVSLSFTIEDTNTIKLNGVYLDENGVAQILKFMNNAKSALNTSNSLMNFLESINIKNIFYNNLDPNIEFILDTNFIISGSNSIGQFELICDKDKNIQPYFINFKIKETSYTLYVGNRQNLIVEPSYHLDDSGNISSTVINFSQKYLYGIDRYVNKVIIAPNLYTDEINITPVYKPNYICPEVIILDANYINEKINVNINDLSIRYVWDNDGSDLILIANSEEDNQPQVKIRFVNVFKSDTAADKLSFNFSDKQDVSVSKIISTFSLAAYSDGFFDYEFGLVSLDNDYFYINSFGNMVSGLIYINDSLYYFKPPKNNLITGFTTIDGNKYYFDPTKSGAASIGEITIDGKDYYFNKQGILQVGVINTSDGLKYFAPAGTLDENLEGESVNFIGKLNIDGKIYYFEDNYRAAVEWKLLDDETYYFNPKTGEALKGLHQIGDNKYYFDDNGIMQTGFITINDKVFYFNNDGVMQVGYIEVNGKYFYFGKNGERQLGVFNTPDGFKFFGPKDDDLGTEEGELTLYNGILNFNGKIYFFDISNTAVVGWGTLDDGSTYYFDDNRAEACIGLTVINDCKYYFDDNGIRQLGFITINDNIFYFSESGKIELGYQNINGNYFYIDESGLVLIGVFDTPDGYKYFAPLNTVNDNIYGQAVKYSGLVRVNEDVYYFGETYKIETGWIENETDKYYFDPETKKAYKGINVVDDIKYYFDENGIMRTGLISFENNNYYFNEDGKMQFGYLNIKDKMFYFGKDGKMQIGVFNTPDGFKYFAHQNTLDENFEGESINYTGWLDLDGKRYYFTDEYIAATGSLTIDGYNYYFDPDTAELVVSE.

Positions 1–91 (MNLVNKAQLQ…EVLELKNNSL (91 aa)) are four-helical bundle. Positions 96 to 468 (KNLHFIWIGG…APDVRSTINL (373 aa)) constitute a GT44 domain. The interval 96–468 (KNLHFIWIGG…APDVRSTINL (373 aa)) is glucosyltransferase region. UDP-alpha-D-glucose contacts are provided by residues 101–103 (IWI), Asn139, 265–270 (LAAASD), and 286–288 (DVD). Residues Asp288, Glu515, and Ser518 each coordinate Mg(2+). A UDP-alpha-D-glucose-binding site is contributed by 518–520 (SLW). The tract at residues 544-799 (GEDDNLDFAQ…KSKYLHELST (256 aa)) is autoprocessing region. Zn(2+) contacts are provided by Glu545 and Asp546. The Peptidase C80 domain maps to 567-774 (LSSMKTRNKE…EESIIKDISS (208 aa)). The 1D-myo-inositol hexakisphosphate site is built by Tyr577, Lys600, and Lys647. His653 contributes to the Zn(2+) binding site. His653 serves as the catalytic For protease activity. The active-site Nucleophile; for protease activity is the Cys698. His757 serves as a coordination point for Zn(2+). 1D-myo-inositol hexakisphosphate is bound by residues Lys764, Lys775, and Lys792. Positions 800–1500 (LLQEIRNNAN…ESIIRNIYMP (701 aa)) are translocation region. Interaction with host SEMA6A and SEMA6B regions lie at residues 1433 to 1438 (CMKLIE), 1466 to 1471 (DNETKY), 1484 to 1495 (FTAEFSNESIIR), 1504 to 1511 (NLFIYSSK), and 1596 to 1601 (YNNLDP). 20 Cell wall-binding repeats span residues 1813 to 1832 (EFGL…FGNM), 1833 to 1852 (VSGL…PKNN), 1854 to 1873 (ITGF…TKSG), 1876 to 1895 (SIGE…QGIL), 1926 to 1945 (FIGK…NYRA), 1946 to 1965 (AVEW…KTGE), 1967 to 1986 (LKGL…NGIM), 1987 to 2006 (QTGF…DGVM), 2007 to 2026 (QVGY…NGER), 2057 to 2076 (YNGI…SNTA), 2077 to 2097 (VVGW…NRAE), 2099 to 2118 (CIGL…NGIR), 2119 to 2138 (QLGF…SGKI), 2139 to 2158 (ELGY…SGLV), 2209 to 2224 (ETGW…YFDP), 2227 to 2249 (KKAY…NGIM), 2250 to 2269 (RTGL…DGKM), 2270 to 2289 (QFGY…DGKM), 2320 to 2339 (YTGW…EYIA), and 2340 to 2359 (ATGS…DTAE). Residues 1835–2364 (GLIYINDSLY…PDTAELVVSE (530 aa)) form a receptor-binding (CROPS) region region.

It belongs to the clostridial glucosylating toxin (LCGT) family. Homomultimer; forms an inactive homomultimer at pH 8, which dissociates at pH 4, leading to cytotoxicity. Interacts with host SEMA6A; interaction promotes toxin entry into host cell. Interacts with host SEMA6B; interaction promotes toxin entry into host cell. Zn(2+) serves as cofactor. It depends on Mn(2+) as a cofactor. The cofactor is Mg(2+). Post-translationally, undergoes autocatalytic cleavage to release the N-terminal part (Glucosyltransferase TcsL), which constitutes the active part of the toxin, in the host cytosol. 1D-myo-inositol hexakisphosphate-binding (InsP6) activates the peptidase C80 domain and promotes autoprocessing.

Its subcellular location is the secreted. It is found in the host endosome membrane. It localises to the host cytoplasm. The protein localises to the host cytosol. The protein resides in the host cell membrane. The enzyme catalyses L-threonyl-[protein] + UDP-alpha-D-glucose = 3-O-(alpha-D-glucosyl)-L-threonyl-[protein] + UDP + H(+). Protease activity is activated upon binding to 1D-myo-inositol hexakisphosphate (InsP6), which induces conformational reorganization. Functionally, precursor of a cytotoxin that targets the vascular endothelium, inducing an anti-inflammatory effect and resulting in lethal toxic shock syndrome. TcsL constitutes the main toxin that mediates the pathology of P.sordellii infection, an anaerobic Gram-positive bacterium found in soil and in the gastrointestinal and vaginal tracts of animals and humans; although the majority of carriers are asymptomatic, pathogenic P.sordellii infections arise rapidly and are highly lethal. This form constitutes the precursor of the toxin: it enters into host cells and mediates autoprocessing to release the active toxin (Glucosyltransferase TcsL) into the host cytosol. Targets vascular endothelium by binding to the semaphorin proteins SEMA6A and SEMA6B, and enters host cells via clathrin-mediated endocytosis. Once entered into host cells, acidification in the endosome promotes the membrane insertion of the translocation region and formation of a pore, leading to translocation of the GT44 and peptidase C80 domains across the endosomal membrane. This activates the peptidase C80 domain and autocatalytic processing, releasing the N-terminal part (Glucosyltransferase TcsL), which constitutes the active part of the toxin, in the cytosol. Active form of the toxin, which is released into the host cytosol following autoprocessing and inactivates small GTPases. Acts by mediating monoglucosylation of small GTPases of the Ras (H-Ras/HRAS, K-Ras/KRAS, N-Ras/NRAS and Ral/RALA) family in host cells at the conserved threonine residue located in the switch I region ('Thr-37/35'), using UDP-alpha-D-glucose as the sugar donor. Also able to catalyze monoglucosylation of some members of the Rho family (Rac1 and Rap2A), but with less efficiency than with Ras proteins. Monoglucosylation of host small GTPases completely prevents the recognition of the downstream effector, blocking the GTPases in their inactive form and leading to apoptosis. Induces an anti-inflammatory effect, mainly by inactivating Ras proteins which results in blockage of the cell cycle and killing of immune cells. The absence or moderate local inflammatory response allows C.sordellii spreading in deep tissues, production of toxin which is released in the general circulation and causes a toxic shock syndrome. The protein is Cytotoxin-L of Paraclostridium sordellii (Clostridium sordellii).